We begin with the raw amino-acid sequence, 210 residues long: HTH-type transcriptional regulator TtgR (210 aa).

Residues 10–70 form the HTH tetR-type domain; sequence QETRAQIIEA…ALLDSLHETH (61 aa). The H-T-H motif DNA-binding region spans 33-52; it reads TLADIAELAGVTRGAIYWHF.

In terms of assembly, homodimer.

Its function is as follows. Represses expression from the ttgABC operon promoter and its own expression. Binds to a promoter region between the divergently transcribed ttgR and ttgABC genes/operons; in the presence of chloramphenicol or tetracycline this binding no longer occurs and ttgR and ttgABC are derepressed. This suggests that TtgR binds these antibiotics. The protein is HTH-type transcriptional regulator TtgR (ttgR) of Pseudomonas putida (strain DOT-T1E).